A 176-amino-acid chain; its full sequence is 3-hydroxydecanoyl-[acyl-carrier-protein] dehydratase (176 aa).

H75 is an active-site residue.

The protein belongs to the thioester dehydratase family. FabA subfamily. Homodimer.

The protein localises to the cytoplasm. It catalyses the reaction a (3R)-hydroxyacyl-[ACP] = a (2E)-enoyl-[ACP] + H2O. It carries out the reaction (3R)-hydroxydecanoyl-[ACP] = (2E)-decenoyl-[ACP] + H2O. The enzyme catalyses (2E)-decenoyl-[ACP] = (3Z)-decenoyl-[ACP]. The protein operates within lipid metabolism; fatty acid biosynthesis. In terms of biological role, necessary for the introduction of cis unsaturation into fatty acids. Catalyzes the dehydration of (3R)-3-hydroxydecanoyl-ACP to E-(2)-decenoyl-ACP and then its isomerization to Z-(3)-decenoyl-ACP. Can catalyze the dehydratase reaction for beta-hydroxyacyl-ACPs with saturated chain lengths up to 16:0, being most active on intermediate chain length. This Glaesserella parasuis serovar 5 (strain SH0165) (Haemophilus parasuis) protein is 3-hydroxydecanoyl-[acyl-carrier-protein] dehydratase.